Reading from the N-terminus, the 60-residue chain is Small ribosomal subunit protein bS21 (60 aa).

Residues 35–60 (REHYEKPSVKRKKKSEAARRRKSKVR) form a disordered region. Basic residues predominate over residues 43–60 (VKRKKKSEAARRRKSKVR).

Belongs to the bacterial ribosomal protein bS21 family.

This chain is Small ribosomal subunit protein bS21, found in Clostridium novyi (strain NT).